Reading from the N-terminus, the 88-residue chain is UPF0297 protein BT9727_4120 (88 aa).

This sequence belongs to the UPF0297 family.

This chain is UPF0297 protein BT9727_4120, found in Bacillus thuringiensis subsp. konkukian (strain 97-27).